A 626-amino-acid chain; its full sequence is Dynein, cytoplasmic 1, intermediate chain 2a (626 aa).

Residues 20–43 (QIREEKKRKEEERKKKEAELKKDA) show a composition bias toward basic and acidic residues. Disordered stretches follow at residues 20–108 (QIRE…RTLH) and 142–197 (KEVV…HELT). Positions 82-99 (TAKSVGSPSEAGSQDSGD) are enriched in polar residues. Residues 160-169 (KDEEDEEEET) show a composition bias toward acidic residues. The segment covering 177 to 197 (ETEKEKPEEKQVEEALPHELT) has biased composition (basic and acidic residues). WD repeat units follow at residues 265 to 314 (SKQR…ATPE), 318 to 358 (HCQS…RTPV), 367 to 408 (AHTH…QPQD), 417 to 457 (SKSV…AGIS), 462 to 507 (GHHG…PLYS), 510 to 550 (DNSD…EVPT), and 556 to 595 (DGSPALNRLRWSQSGREIAVGDSEGQIHIYDVGEQIAVPR).

The protein belongs to the dynein intermediate chain family. Homodimer. The cytoplasmic dynein 1 complex consists of two catalytic heavy chains (HCs) and a number of non-catalytic subunits presented by intermediate chains (ICs), light intermediate chains (LICs) and light chains (LCs); the composition seems to vary in respect to the IC, LIC and LC composition. The heavy chain homodimer serves as a scaffold for the probable homodimeric assembly of the respective non-catalytic subunits. The ICs and LICs bind directly to the HC dimer and the LCs assemble on the IC dimer.

The protein resides in the cytoplasm. Its subcellular location is the cytoskeleton. Functionally, acts as one of several non-catalytic accessory components of the cytoplasmic dynein 1 complex that are thought to be involved in linking dynein to cargos and to adapter proteins that regulate dynein function. Cytoplasmic dynein 1 acts as a motor for the intracellular retrograde motility of vesicles and organelles along microtubules. Plays a role in the development of anterior brain and cartilaginous structures. The polypeptide is Dynein, cytoplasmic 1, intermediate chain 2a (dync1i2a) (Danio rerio (Zebrafish)).